A 334-amino-acid chain; its full sequence is D-alanine--D-alanine ligase (334 aa).

Residues 121 to 327 (KLWYDALDIP…FSEFLVQCVT (207 aa)) form the ATP-grasp domain. 151–206 (AFGHWGSIFVKAARQGSSVGCYKVTTEDQIAPAIEAAFGFSEQVLVEQAVKPRELE) lines the ATP pocket. Positions 281, 294, and 296 each coordinate Mg(2+).

The protein belongs to the D-alanine--D-alanine ligase family. Mg(2+) is required as a cofactor. Mn(2+) serves as cofactor.

It is found in the cytoplasm. The enzyme catalyses 2 D-alanine + ATP = D-alanyl-D-alanine + ADP + phosphate + H(+). It functions in the pathway cell wall biogenesis; peptidoglycan biosynthesis. In terms of biological role, cell wall formation. This Vibrio cholerae serotype O1 (strain ATCC 39315 / El Tor Inaba N16961) protein is D-alanine--D-alanine ligase.